The primary structure comprises 131 residues: Small ribosomal subunit protein uS8 (131 aa).

This sequence belongs to the universal ribosomal protein uS8 family. As to quaternary structure, part of the 30S ribosomal subunit. Contacts proteins S5 and S12.

In terms of biological role, one of the primary rRNA binding proteins, it binds directly to 16S rRNA central domain where it helps coordinate assembly of the platform of the 30S subunit. In Dechloromonas aromatica (strain RCB), this protein is Small ribosomal subunit protein uS8.